Here is a 474-residue protein sequence, read N- to C-terminus: Tumor necrosis factor receptor superfamily member 1B (474 aa).

Positions 1 to 22 are cleaved as a signal peptide; it reads MAPAALWVALVFELQLWATGHT. The Extracellular portion of the chain corresponds to 23–258; the sequence is VPAQVVLTPY…PIIEQSTKGG (236 aa). O-linked (GalNAc...) threonine glycosylation occurs at T30. TNFR-Cys repeat units follow at residues 39–77, 78–119, 120–164, and 165–203; these read ECQI…TVCA, DCEA…NRVC, ACEA…VLCK, and ACAP…AVCA. 10 cysteine pairs are disulfide-bonded: C40–C54, C55–C68, C58–C76, C79–C94, C97–C111, C101–C119, C121–C127, C136–C145, C139–C163, and C166–C181. An N-linked (GlcNAc...) asparagine glycan is attached at N69. N195 carries N-linked (GlcNAc...) asparagine glycosylation. T208 and T224 each carry an O-linked (GalNAc...) threonine glycan. A disordered region spans residues 220–243; sequence QPEPTRSQPLDQEPGPSQTPSILT. Residues 259–288 traverse the membrane as a helical segment; sequence ISLPIGLIVGVTSLGLLMLGLVNCIILVQR. At 289–474 the chain is on the cytoplasmic side; it reads KKKPSCLQRD…WFDQIAVKVA (186 aa). Disordered stretches follow at residues 295-314, 321-378, and 397-463; these read LQRD…DAVG, LTTA…GSHG, and SQCS…PSQA. Residues 297–310 are compositionally biased toward basic and acidic residues; sequence RDAKVPHVPDEKSQ. 2 stretches are compositionally biased toward low complexity: residues 324–338 and 363–378; these read APSS…SASA and ARAS…GSHG. At S331 the chain carries Phosphoserine. Polar residues predominate over residues 429–442; sequence ECPSQSPCETTETL.

As to quaternary structure, binds to TRAF2. Interacts with BMX. Interacts (activated form) with XPNPEP3.

It localises to the membrane. Functionally, receptor with high affinity for TNFSF2/TNF-alpha and approximately 5-fold lower affinity for homotrimeric TNFSF1/lymphotoxin-alpha. The TRAF1/TRAF2 complex recruits the apoptotic suppressors BIRC2 and BIRC3 to TNFRSF1B/TNFR2. This is Tumor necrosis factor receptor superfamily member 1B (Tnfrsf1b) from Mus musculus (Mouse).